The following is a 207-amino-acid chain: MGTVKITSRYGILLGFIALLCTIISAGIYFLTKDKIDAVIAAQQRELLLQVIPQDYFNNNLLESAVIPQDKNFVGIQKIYFAKKDGNISAYAYETTAPDGYSGDIRLLVGLDPKGEVLGVRVIEHHETPGLGDKIERRISNWILGFTNQSINEHNLSEWAVKKDGGKFDQFSGATITPRAVVNQTKRSALIMLNNQALLQQLSTQVK.

A helical membrane pass occupies residues 11–31; that stretch reads GILLGFIALLCTIISAGIYFL. At Thr-175 the chain carries FMN phosphoryl threonine.

This sequence belongs to the RnfG family. As to quaternary structure, the complex is composed of six subunits: RnfA, RnfB, RnfC, RnfD, RnfE and RnfG. FMN serves as cofactor.

It is found in the cell inner membrane. In terms of biological role, part of a membrane-bound complex that couples electron transfer with translocation of ions across the membrane. This chain is Ion-translocating oxidoreductase complex subunit G, found in Haemophilus influenzae (strain PittEE).